A 291-amino-acid polypeptide reads, in one-letter code: Insulin-like growth factor-binding protein 3 (291 aa).

The first 27 residues, 1-27 (MQRARPTLWAAALTLLVLLRGPPVARA), serve as a signal peptide directing secretion. The tract at residues 28–134 (GASSAGLGPV…AYLLPAPPAP (107 aa)) is IGF-binding. The IGFBP N-terminal domain occupies 36-117 (PVVRCEPCDA…LDGRGLCVNA (82 aa)). 6 disulfides stabilise this stretch: Cys-40-Cys-67, Cys-43-Cys-69, Cys-51-Cys-70, Cys-58-Cys-73, Cys-81-Cys-94, and Cys-88-Cys-114. 2 N-linked (GlcNAc...) (complex) asparagine glycosylation sites follow: Asn-116 and Asn-136. 2 disordered regions span residues 130–162 (APPA…RVSD) and 189–211 (DYES…TEYG). Positions 146-156 (AGSVESPSVSS) are enriched in low complexity. Ser-148 carries the phosphoserine; by FAM20C modification. Residues 191–202 (ESQSTDTQNFSS) are compositionally biased toward polar residues. Ser-194 carries the post-translational modification Phosphoserine; by CK2. An N-linked (GlcNAc...) (complex) asparagine glycan is attached at Asn-199. At Ser-201 the chain carries Phosphoserine; by FAM20C. Ser-202 is subject to Phosphoserine; by CK2. Residues 210 to 285 (YGPCRREMED…TTKGKEDVHC (76 aa)) form the Thyroglobulin type-1 domain. 3 disulfides stabilise this stretch: Cys-213–Cys-240, Cys-251–Cys-262, and Cys-264–Cys-285.

Interacts with XLKD1. Binds IGF2 more than IGF1. Forms a ternary complex of about 140 to 150 kDa with IGF1 or IGF2 and a 85 kDa glycoprotein (ALS). Interacts with humanin; humanin competes with importin KPNB1 for binding to IGFBP3, blocking IGFBP3 nuclear import and IGFBP3-mediated apoptosis. Interacts with TMEM219. Interacts with RXRA; this interaction modulates the transcriptional activity of RXRA. Interacts with LRP1; this interaction mediates cell growth inhibition independent of IGF1. Phosphorylated by FAM20C in the extracellular medium. Phosphorylated by CK2; resulting in decreased nuclear localization. Expressed by most tissues. Present in plasma.

Its subcellular location is the secreted. The protein localises to the nucleus. In terms of biological role, multifunctional protein that plays a critical role in regulating the availability of IGFs such as IGF1 and IGF2 to their receptors and thereby regulates IGF-mediated cellular processes including proliferation, differentiation, and apoptosis in a cell-type specific manner. Also exhibits IGF-independent antiproliferative and apoptotic effects mediated by its receptor TMEM219/IGFBP-3R. Inhibits the positive effect of humanin on insulin sensitivity. Promotes testicular germ cell apoptosis. Acts via LRP-1/alpha2M receptor, also known as TGF-beta type V receptor, to mediate cell growth inhibition independent of IGF1. Mechanistically, induces serine-specific dephosphorylation of IRS1 or IRS2 upon ligation to its receptor, leading to the inhibitory cascade. In the nucleus, interacts with transcription factors such as retinoid X receptor-alpha/RXRA to regulate transcriptional signaling and apoptosis. The chain is Insulin-like growth factor-binding protein 3 (IGFBP3) from Homo sapiens (Human).